The following is a 653-amino-acid chain: Protein SCARECROW (653 aa).

Disordered regions lie at residues 1-69 (MAES…RRVS) and 193-265 (PSSS…AVQT). The segment covering 17–31 (PLRTTSSGSSSSNNR) has biased composition (low complexity). The segment covering 32 to 41 (GPPPPPPPPL) has biased composition (pro residues). The segment covering 51–63 (EMSSNPDYNNSSR) has biased composition (polar residues). Residues 209-230 (QISNNPSPPQQQQQHQQQQQQH) show a composition bias toward low complexity. Positions 246 to 265 (STDAPPQPETVTATVPAVQT) are enriched in polar residues. The 370-residue stretch at 281–650 (QKQDEEGLHL…LSLLTASAWT (370 aa)) folds into the GRAS domain. Residues 288–351 (LHLLTLLLQC…LLNSCLGIYA (64 aa)) are leucine repeat I (LRI). The LxCxE motif motif lies at 295–299 (LQCAE). Positions 370–435 (FQVFNGISPL…GGPPHVRLTG (66 aa)) are VHIID. The VHIID signature appears at 401-405 (VHIID). Positions 445–477 (ATGKRLSDFADKLGLPFEFCPLAEKVGNLDTER) are leucine repeat II (LRII). The segment at 486-573 (VAVHWLQHSL…QQLLSKEIRN (88 aa)) is PFYRE. Positions 576–650 (AVGGPSRSGE…LSLLTASAWT (75 aa)) are SAW.

This sequence belongs to the GRAS family. In terms of assembly, interacts with SHR, JKD and MGP. Interacts with SIEL. Interacts with RBR1 through its the LxCxE motif. Expressed in siliques, leaves and roots. Detected in the initial daughter cell before its asymmetric division and remains expressed only in the endodermal cell layer after the division. Expressed in the endodermis or starch sheath of the seedling hypocotyl, in the leaf bundle sheath cells and the root quiescent center.

Its subcellular location is the nucleus. In terms of biological role, transcription factor required for quiescent center cells specification and maintenance of surrounding stem cells, and for the asymmetric cell division involved in radial pattern formation in roots. Essential for cell division but not differentiation of the ground tissue. Also required for normal shoot gravitropism. Regulates the radial organization of the shoot axial organs. Binds to the promoter of MGP, NUC, RLK and SCL3. Restricts SHR movment and sequesters it into the nucleus of the endodermis. This Arabidopsis thaliana (Mouse-ear cress) protein is Protein SCARECROW.